We begin with the raw amino-acid sequence, 327 residues long: Phenylalanine--tRNA ligase alpha subunit (327 aa).

E252 lines the Mg(2+) pocket.

Belongs to the class-II aminoacyl-tRNA synthetase family. Phe-tRNA synthetase alpha subunit type 1 subfamily. As to quaternary structure, tetramer of two alpha and two beta subunits. It depends on Mg(2+) as a cofactor.

It is found in the cytoplasm. It catalyses the reaction tRNA(Phe) + L-phenylalanine + ATP = L-phenylalanyl-tRNA(Phe) + AMP + diphosphate + H(+). This chain is Phenylalanine--tRNA ligase alpha subunit, found in Glaesserella parasuis serovar 5 (strain SH0165) (Haemophilus parasuis).